Here is a 54-residue protein sequence, read N- to C-terminus: UPF0391 membrane protein Bpro_0879 (54 aa).

2 consecutive transmembrane segments (helical) span residues 6 to 26 (VVFL…IAAG) and 30 to 50 (IAKI…VMGL).

It belongs to the UPF0391 family.

The protein resides in the cell membrane. This is UPF0391 membrane protein Bpro_0879 from Polaromonas sp. (strain JS666 / ATCC BAA-500).